Reading from the N-terminus, the 1681-residue chain is Probable clathrin heavy chain 1 (1681 aa).

WD40-like repeat stretches follow at residues 22-65 (NITF…RPIS), 66-105 (ADSV…NVED), 106-147 (VVYW…QSLA), 148-193 (GTQI…QPIE), 194-255 (GHAA…ADTA), 256-299 (GDFP…ISTD), and 300-328 (TVFV…VSID). 7 CHCR repeats span residues 539-685 (SENG…QVVV), 688-830 (ASKY…SEDA), 835-974 (IINT…QLID), 981-1126 (LSET…VKEA), 1130-1271 (FIKA…FRLA), 1276-1422 (LHIV…LLLN), and 1425-1568 (LTVL…YDCF). Over residues 1616–1628 (ERSEHERKEEKAE) the composition is skewed to basic and acidic residues. The tract at residues 1616 to 1635 (ERSEHERKEEKAEQQQNNGM) is disordered.

This sequence belongs to the clathrin heavy chain family. Clathrin triskelions, composed of 3 heavy chains and 3 light chains, are the basic subunits of the clathrin coat. May interact with beta arrestin arr-1.

Its subcellular location is the cytoplasmic vesicle membrane. The protein resides in the membrane. The protein localises to the coated pit. Its function is as follows. Clathrin is the major protein of the polyhedral coat of coated pits and vesicles. May play a role in yolk protein clatherin-mediated endocytosis by oocytes during oogenesis. The polypeptide is Probable clathrin heavy chain 1 (chc-1) (Caenorhabditis elegans).